The following is a 387-amino-acid chain: Glutamate N-acetyltransferase (387 aa).

Residues Thr-140, Lys-162, Thr-173, Glu-257, Asn-382, and Thr-387 each coordinate substrate. Thr-173 serves as the catalytic Nucleophile.

It belongs to the ArgJ family. Heterotetramer of two alpha and two beta chains.

It is found in the cytoplasm. It carries out the reaction N(2)-acetyl-L-ornithine + L-glutamate = N-acetyl-L-glutamate + L-ornithine. Its pathway is amino-acid biosynthesis; L-arginine biosynthesis; L-ornithine and N-acetyl-L-glutamate from L-glutamate and N(2)-acetyl-L-ornithine (cyclic): step 1/1. Catalyzes the transfer of the acetyl group from N(2)-acetylornithine to glutamate, forming N-acetylglutamate and L-ornithine. This chain is Glutamate N-acetyltransferase, found in Methanopyrus kandleri (strain AV19 / DSM 6324 / JCM 9639 / NBRC 100938).